The sequence spans 162 residues: Large ribosomal subunit protein uL10 (162 aa).

The protein belongs to the universal ribosomal protein uL10 family. Part of the ribosomal stalk of the 50S ribosomal subunit. The N-terminus interacts with L11 and the large rRNA to form the base of the stalk. The C-terminus forms an elongated spine to which L12 dimers bind in a sequential fashion forming a multimeric L10(L12)X complex.

Functionally, forms part of the ribosomal stalk, playing a central role in the interaction of the ribosome with GTP-bound translation factors. The sequence is that of Large ribosomal subunit protein uL10 from Acholeplasma laidlawii (strain PG-8A).